The sequence spans 653 residues: Sodium-dependent phosphate transporter 2 (653 aa).

The Extracellular portion of the chain corresponds to 1 to 5; it reads MVLDE. The helical transmembrane segment at 6–26 threads the bilayer; sequence YMWMVIVGFIIAFVLAFSVGA. Over 27-46 the chain is Cytoplasmic; the sequence is NDVANSFGTAVGSGVVTLRQ. The chain crosses the membrane as a helical span at residues 47 to 67; it reads ACILASIFETIGSVLLGAKVG. Residues 68 to 86 lie on the Extracellular side of the membrane; sequence ETIRKGIIDVNLYNNTVDL. N-linked (GlcNAc...) asparagine glycosylation occurs at asparagine 81. The helical transmembrane segment at 87–107 threads the bilayer; it reads LMAGEVSAMVGSAVWQLIASF. Residues 108-109 are Cytoplasmic-facing; sequence LK. Residues 110-130 form a helical membrane-spanning segment; the sequence is LPVSGTHCIVGATIGFSLVAV. The Extracellular portion of the chain corresponds to 131-142; that stretch reads GAHSVQWMQLVK. Residues 143-163 traverse the membrane as a helical segment; the sequence is IVASWFISPLLSGLMSGALFL. Residues 164 to 187 are Cytoplasmic-facing; that stretch reads MIKFFILNKEDPVPNGLKALPVFY. Residues 188–208 traverse the membrane as a helical segment; the sequence is AATIGINVFSILFTGAPLLGL. At 209–217 the chain is on the extracellular side; it reads QTFPVWATA. Residues 218 to 238 form a helical membrane-spanning segment; it reads LLSVGIAIVFALVVWFFVCPW. The Cytoplasmic portion of the chain corresponds to 239-483; that stretch reads MKKKIASRLK…EDKEEKDKSQ (245 aa). Positions 275 to 310 are disordered; it reads LPGAKGNDESVLPLTSSSPDAAVSSESVSNGNTRVP. Over residues 290 to 303 the composition is skewed to low complexity; sequence SSSPDAAVSSESVS. Residues 484 to 504 form a helical membrane-spanning segment; it reads VHLLFHFLQILTACFGSFAHG. At 505-532 the chain is on the extracellular side; that stretch reads GNDVSNAIGPLVALWLIYQQGGVMQEAS. The helical transmembrane segment at 533-553 threads the bilayer; it reads TPVWLLLYGGVGICAGLWVWG. The Cytoplasmic segment spans residues 554–572; the sequence is RRVIQTMGKDLTPITPSSG. A helical transmembrane segment spans residues 573-587; the sequence is FTIELASAFTVVVAS. The Extracellular portion of the chain corresponds to 588–594; the sequence is NIGLPIS. A helical membrane pass occupies residues 595-610; the sequence is TTHCKVGSVVAVGWIR. Over 611–622 the chain is Cytoplasmic; that stretch reads SRKAVDWRLFRN. A helical membrane pass occupies residues 623-643; it reads IFLAWFVTVPVAGLFSAGVMA. Residues 644–653 are Extracellular-facing; the sequence is ILQYGILPYV.

This sequence belongs to the inorganic phosphate transporter (PiT) (TC 2.A.20) family. As to quaternary structure, homodimer.

The protein localises to the cell membrane. It localises to the apical cell membrane. The enzyme catalyses 2 Na(+)(out) + phosphate(out) = 2 Na(+)(in) + phosphate(in). In terms of biological role, sodium-phosphate symporter which preferentially transports the monovalent form of phosphate with a stoichiometry of two sodium ions per phosphate ion. The sequence is that of Sodium-dependent phosphate transporter 2 (slc20a2) from Xenopus laevis (African clawed frog).